Reading from the N-terminus, the 261-residue chain is UPF0246 protein Rmet_0978 (261 aa).

This sequence belongs to the UPF0246 family.

In Cupriavidus metallidurans (strain ATCC 43123 / DSM 2839 / NBRC 102507 / CH34) (Ralstonia metallidurans), this protein is UPF0246 protein Rmet_0978.